A 991-amino-acid chain; its full sequence is Replication protein 1a (991 aa).

The tract at residues 52–409 (VLDVKDSEVI…TIVINGMSMQ (358 aa)) is methyltransferase. The 219-residue stretch at 72–290 (HLAQQELAPH…HDWDNIKSFM (219 aa)) folds into the Alphavirus-like MT domain. Residues 686–837 (CVISNSHDLF…KLIPDETSDA (152 aa)) form the (+)RNA virus helicase ATP-binding domain. The interval 711–973 (VDGVAGCGKT…VTRHKVTFRY (263 aa)) is ATP-dependent helicase. 713 to 720 (GVAGCGKT) is an ATP binding site. In terms of domain architecture, (+)RNA virus helicase C-terminal spans 838-991 (DTTFRSPQDV…DLIANCIPLV (154 aa)).

It belongs to the bromoviridae replication protein 1a family. Interacts with RNA-directed RNA polymerase 2a.

It is found in the host endoplasmic reticulum membrane. In terms of biological role, involved in the virus replication. Contains a helicase domain and a methyltransferase domain. The methyltransferase domain is probably involved in viral RNA capping. Involved in the formation of ER membrane spherular invaginations in which RNA replication complexes form. The polypeptide is Replication protein 1a (Cucumber mosaic virus (strain Q) (CMV)).